The primary structure comprises 1025 residues: Leucyl-cystinyl aminopeptidase (1025 aa).

Met-1 is modified (N-acetylmethionine). Over Met-1–Thr-110 the chain is Cytoplasmic. Residues Leu-53 to Leu-54 carry the Dileucine internalization motif motif. Tyr-70 carries the phosphotyrosine modification. Residues Leu-76–Leu-77 carry the Dileucine internalization motif motif. Ser-80 and Ser-91 each carry phosphoserine. Residues Arg-96–Gly-101 form a tankyrase binding region. Residues Met-111–Leu-131 form a helical; Signal-anchor for type II membrane protein membrane-spanning segment. Topologically, residues Pro-132–Leu-1025 are extracellular. N-linked (GlcNAc...) asparagine glycosylation is found at Asn-145, Asn-184, Asn-215, Asn-256, and Asn-266. Glu-295 contributes to the substrate binding site. Residues Asn-368 and Asn-374 are each glycosylated (N-linked (GlcNAc...) asparagine). Gly-428 to Asn-432 contributes to the substrate binding site. An N-linked (GlcNAc...) asparagine glycan is attached at Asn-448. Zn(2+) is bound at residue His-464. The active-site Proton acceptor is the Glu-465. Zn(2+)-binding residues include His-468 and Glu-487. 9 N-linked (GlcNAc...) asparagine glycosylation sites follow: Asn-525, Asn-578, Asn-598, Asn-664, Asn-682, Asn-760, Asn-834, Asn-850, and Asn-989.

Belongs to the peptidase M1 family. Homodimer. Binds tankyrases 1 and 2. The cofactor is Zn(2+). Post-translationally, the pregnancy serum form is derived from the membrane-bound form by proteolytic processing. In terms of processing, N-glycosylated. As to expression, highly expressed in placenta, heart, kidney and small intestine. Detected at lower levels in neuronal cells in the brain, in skeletal muscle, spleen, liver, testes and colon.

The protein localises to the cell membrane. Its subcellular location is the secreted. The enzyme catalyses Release of an N-terminal amino acid, Cys-|-Xaa-, in which the half-cystine residue is involved in a disulfide loop, notably in oxytocin or vasopressin. Hydrolysis rates on a range of aminoacyl arylamides exceed that for the cystinyl derivative, however.. Release of an N-terminal amino acid, cleaves before cysteine, leucine as well as other amino acids. Degrades peptide hormones such as oxytocin, vasopressin and angiotensin III, and plays a role in maintaining homeostasis during pregnancy. May be involved in the inactivation of neuronal peptides in the brain. Cleaves Met-enkephalin and dynorphin. Binds angiotensin IV and may be the angiotensin IV receptor in the brain. The sequence is that of Leucyl-cystinyl aminopeptidase (LNPEP) from Homo sapiens (Human).